We begin with the raw amino-acid sequence, 119 residues long: Large ribosomal subunit protein uL18 (119 aa).

It belongs to the universal ribosomal protein uL18 family. As to quaternary structure, part of the 50S ribosomal subunit; part of the 5S rRNA/L5/L18/L25 subcomplex. Contacts the 5S and 23S rRNAs.

Functionally, this is one of the proteins that bind and probably mediate the attachment of the 5S RNA into the large ribosomal subunit, where it forms part of the central protuberance. The protein is Large ribosomal subunit protein uL18 of Xylella fastidiosa (strain M23).